A 1147-amino-acid polypeptide reads, in one-letter code: Protein lin-41 (1147 aa).

The interval 1–93 (MATIVPCSLE…PPSMIQSPQQ (93 aa)) is disordered. Residues 33–47 (SGNELSMGGSSSEGD) are compositionally biased toward low complexity. Positions 48-65 (SMSHHRGEHSPNHHHQDN) are enriched in basic and acidic residues. A compositionally biased stretch (low complexity) spans 84-93 (PPSMIQSPQQ). An RING-type zinc finger spans residues 114-155 (CSVCSKSSTIGVLPFVCAHKTCQSCYQMTPSSYDRRACKLCG). The segment at 366-412 (MGPIQCQGCESKISFAYCMQCQEALCIHCVQAHQRVRATKQHAFVEL) adopts a B box-type; atypical zinc-finger fold. Cys371, Cys374, Cys394, and His398 together coordinate Zn(2+). Positions 565 to 618 (AFDTHVNALEERRKELLKRVETVKNLKLSVLISQAESLQSKQIDLQQAIQTATK) form a coiled coil. The Filamin repeat unit spans residues 723–817 (ACGDLLSSSI…ISGCPTTMDI (95 aa)). 6 NHL repeats span residues 832–875 (ILTF…FDKD), 879–922 (ISKF…FDEN), 926–969 (LLKF…FTPQ), 974–1017 (RKCG…LSPR), 1022–1065 (MKVY…FASD), and 1107–1147 (SAPT…IRVF). Residues 1104–1123 (AFSSAPTPLTPSPRQLLDRP) form a disordered region.

The protein belongs to the TRIM/RBCC family.

Its subcellular location is the cytoplasm. It localises to the P-body. In terms of biological role, heterochronic protein which acts downstream of let-7 in temporal patterning. Plays a role in the developmental timing of postembryonic hypodermal seam cell division and fusion events and adult alae production. Represses lin-29 during late larval stages, which prevents terminal differentiation of hypodermal seam cells and promotes their division. Involved in post-transcriptional gene regulation, uses two independent pathways. Has direct and specific RNA-binding activity and, depending on the location (5'UTR or 3'UTR) of the target site, triggers either mRNA decay or repression of translation. Degrades the mRNA of transcription factor dmd-3 to govern the timing and extent of male tail tip morphogenesis. Plays a role in the sexual maturation of the nervous system. This is Protein lin-41 from Caenorhabditis elegans.